The chain runs to 224 residues: Zinc finger C4H2 domain-containing protein (224 aa).

Residues 11–104 are a coiled coil; it reads LESIKEIRNK…RRLHDEYKPL (94 aa). The C4H2-type zinc finger occupies 189 to 206; it reads CLSCHQQIHRNAPICPLC.

In terms of tissue distribution, expressed in fetal tissues, including in brain, intestine, lung, kidney and muscle. Isoform 1 is expressed in numerous fetal brain regions. Isoform 3 is highly expressed in numerous fetal brain regions and spinal cord.

It is found in the cytoplasm. Its subcellular location is the nucleus. It localises to the postsynaptic cell membrane. In terms of biological role, plays a role in interneurons differentiation. Involved in neuronal development and in neuromuscular junction formation. The chain is Zinc finger C4H2 domain-containing protein (ZC4H2) from Homo sapiens (Human).